Consider the following 1073-residue polypeptide: ATP-dependent helicase/deoxyribonuclease subunit B (1073 aa).

This sequence belongs to the helicase family. AddB/RexB type 2 subfamily. As to quaternary structure, heterodimer of AddA and RexB. Requires Mg(2+) as cofactor.

The heterodimer acts as both an ATP-dependent DNA helicase and an ATP-dependent, dual-direction single-stranded exonuclease. Recognizes the chi site generating a DNA molecule suitable for the initiation of homologous recombination. This subunit has 5' -&gt; 3' nuclease activity but not helicase activity. This is ATP-dependent helicase/deoxyribonuclease subunit B from Streptococcus equi subsp. zooepidemicus (strain H70).